A 234-amino-acid polypeptide reads, in one-letter code: Protein XNDC1N (234 aa).

In Homo sapiens (Human), this protein is Protein XNDC1N.